A 609-amino-acid chain; its full sequence is Protein tesmin/TSO1-like CXC 3 (609 aa).

The segment covering 69–84 has biased composition (basic and acidic residues); it reads ESRFRSQKDVSASKEV. 4 disordered regions span residues 69 to 102, 307 to 328, 457 to 477, and 569 to 609; these read ESRF…YKND, PISP…SSCK, LFEQ…KTQQ, and NSKR…TPHH. The CRC domain occupies 326 to 451; that stretch reads SCKRCNCKKS…RCEGCKNAFG (126 aa). The segment covering 466-477 has biased composition (polar residues); that stretch reads TSGTPGTKKTQQ.

The protein belongs to the lin-54 family. As to expression, ubiquitous but expressed mostly in flowers and at significant levels in leaves. Detected with highest levels in developing ovules and microspores, and in petals.

The protein resides in the nucleus. Functionally, plays a role in development of both male and female reproductive tissues. The chain is Protein tesmin/TSO1-like CXC 3 (TCX3) from Arabidopsis thaliana (Mouse-ear cress).